Consider the following 537-residue polypeptide: Chaperonin GroEL (537 aa).

Residues 29–32 (TLGP), 86–90 (DGTTT), Gly-413, and Asp-492 each bind ATP.

This sequence belongs to the chaperonin (HSP60) family. Forms a cylinder of 14 subunits composed of two heptameric rings stacked back-to-back. Interacts with the co-chaperonin GroES.

It localises to the cytoplasm. It catalyses the reaction ATP + H2O + a folded polypeptide = ADP + phosphate + an unfolded polypeptide.. Together with its co-chaperonin GroES, plays an essential role in assisting protein folding. The GroEL-GroES system forms a nano-cage that allows encapsulation of the non-native substrate proteins and provides a physical environment optimized to promote and accelerate protein folding. This chain is Chaperonin GroEL, found in Dehalococcoides mccartyi (strain ATCC BAA-2100 / JCM 16839 / KCTC 5957 / BAV1).